The chain runs to 122 residues: Small ribosomal subunit protein uS13 (122 aa).

The tract at residues 95–122 is disordered; the sequence is GLPVRGQRTHTNARTRKGPAKSIAGKKK.

The protein belongs to the universal ribosomal protein uS13 family. Part of the 30S ribosomal subunit. Forms a loose heterodimer with protein S19. Forms two bridges to the 50S subunit in the 70S ribosome.

Located at the top of the head of the 30S subunit, it contacts several helices of the 16S rRNA. In the 70S ribosome it contacts the 23S rRNA (bridge B1a) and protein L5 of the 50S subunit (bridge B1b), connecting the 2 subunits; these bridges are implicated in subunit movement. Contacts the tRNAs in the A and P-sites. The protein is Small ribosomal subunit protein uS13 of Rhodopseudomonas palustris (strain BisB18).